Reading from the N-terminus, the 759-residue chain is Phosphoribosylformylglycinamidine synthase subunit PurL (759 aa).

His61 is a catalytic residue. Tyr64 and Lys105 together coordinate ATP. Glu107 serves as a coordination point for Mg(2+). Residues 108–111 (SHNH) and Arg130 each bind substrate. Catalysis depends on His109, which acts as the Proton acceptor. Residue Asp131 coordinates Mg(2+). Residue Gln260 participates in substrate binding. Asp288 is a binding site for Mg(2+). 332 to 334 (ESQ) provides a ligand contact to substrate. Positions 520 and 557 each coordinate ATP. Position 558 (Asn558) interacts with Mg(2+). Residue Ser560 coordinates substrate.

Belongs to the FGAMS family. As to quaternary structure, monomer. Part of the FGAM synthase complex composed of 1 PurL, 1 PurQ and 2 PurS subunits.

It localises to the cytoplasm. It catalyses the reaction N(2)-formyl-N(1)-(5-phospho-beta-D-ribosyl)glycinamide + L-glutamine + ATP + H2O = 2-formamido-N(1)-(5-O-phospho-beta-D-ribosyl)acetamidine + L-glutamate + ADP + phosphate + H(+). It functions in the pathway purine metabolism; IMP biosynthesis via de novo pathway; 5-amino-1-(5-phospho-D-ribosyl)imidazole from N(2)-formyl-N(1)-(5-phospho-D-ribosyl)glycinamide: step 1/2. In terms of biological role, part of the phosphoribosylformylglycinamidine synthase complex involved in the purines biosynthetic pathway. Catalyzes the ATP-dependent conversion of formylglycinamide ribonucleotide (FGAR) and glutamine to yield formylglycinamidine ribonucleotide (FGAM) and glutamate. The FGAM synthase complex is composed of three subunits. PurQ produces an ammonia molecule by converting glutamine to glutamate. PurL transfers the ammonia molecule to FGAR to form FGAM in an ATP-dependent manner. PurS interacts with PurQ and PurL and is thought to assist in the transfer of the ammonia molecule from PurQ to PurL. The protein is Phosphoribosylformylglycinamidine synthase subunit PurL of Thermoplasma volcanium (strain ATCC 51530 / DSM 4299 / JCM 9571 / NBRC 15438 / GSS1).